The primary structure comprises 170 residues: ATP synthase subunit b (170 aa).

A helical transmembrane segment spans residues 15–37 (FNLFETNILNWAVVIFGLYKFLP). Positions 72 to 98 (AKKDLSSAEEKASQIKADSLKRSESIR) are disordered.

It belongs to the ATPase B chain family. In terms of assembly, F-type ATPases have 2 components, F(1) - the catalytic core - and F(0) - the membrane proton channel. F(1) has five subunits: alpha(3), beta(3), gamma(1), delta(1), epsilon(1). F(0) has four main subunits: a(1), b(1), b'(1) and c(10-14). The alpha and beta chains form an alternating ring which encloses part of the gamma chain. F(1) is attached to F(0) by a central stalk formed by the gamma and epsilon chains, while a peripheral stalk is formed by the delta, b and b' chains.

The protein localises to the cellular thylakoid membrane. F(1)F(0) ATP synthase produces ATP from ADP in the presence of a proton or sodium gradient. F-type ATPases consist of two structural domains, F(1) containing the extramembraneous catalytic core and F(0) containing the membrane proton channel, linked together by a central stalk and a peripheral stalk. During catalysis, ATP synthesis in the catalytic domain of F(1) is coupled via a rotary mechanism of the central stalk subunits to proton translocation. In terms of biological role, component of the F(0) channel, it forms part of the peripheral stalk, linking F(1) to F(0). The sequence is that of ATP synthase subunit b from Prochlorococcus marinus (strain MIT 9215).